Here is a 208-residue protein sequence, read N- to C-terminus: Thiamine-phosphate synthase (208 aa).

4-amino-2-methyl-5-(diphosphooxymethyl)pyrimidine contacts are provided by residues 37-41 and Asn-73; that span reads QYREK. Mg(2+) contacts are provided by Asp-74 and Asp-93. Position 112 (Ser-112) interacts with 4-amino-2-methyl-5-(diphosphooxymethyl)pyrimidine. 139 to 141 is a binding site for 2-[(2R,5Z)-2-carboxy-4-methylthiazol-5(2H)-ylidene]ethyl phosphate; it reads TIS. Lys-142 lines the 4-amino-2-methyl-5-(diphosphooxymethyl)pyrimidine pocket. 2-[(2R,5Z)-2-carboxy-4-methylthiazol-5(2H)-ylidene]ethyl phosphate is bound by residues Gly-171 and 191 to 192; that span reads IS.

The protein belongs to the thiamine-phosphate synthase family. Mg(2+) serves as cofactor.

The catalysed reaction is 2-[(2R,5Z)-2-carboxy-4-methylthiazol-5(2H)-ylidene]ethyl phosphate + 4-amino-2-methyl-5-(diphosphooxymethyl)pyrimidine + 2 H(+) = thiamine phosphate + CO2 + diphosphate. It carries out the reaction 2-(2-carboxy-4-methylthiazol-5-yl)ethyl phosphate + 4-amino-2-methyl-5-(diphosphooxymethyl)pyrimidine + 2 H(+) = thiamine phosphate + CO2 + diphosphate. It catalyses the reaction 4-methyl-5-(2-phosphooxyethyl)-thiazole + 4-amino-2-methyl-5-(diphosphooxymethyl)pyrimidine + H(+) = thiamine phosphate + diphosphate. It functions in the pathway cofactor biosynthesis; thiamine diphosphate biosynthesis; thiamine phosphate from 4-amino-2-methyl-5-diphosphomethylpyrimidine and 4-methyl-5-(2-phosphoethyl)-thiazole: step 1/1. Its function is as follows. Condenses 4-methyl-5-(beta-hydroxyethyl)thiazole monophosphate (THZ-P) and 2-methyl-4-amino-5-hydroxymethyl pyrimidine pyrophosphate (HMP-PP) to form thiamine monophosphate (TMP). This Listeria welshimeri serovar 6b (strain ATCC 35897 / DSM 20650 / CCUG 15529 / CIP 8149 / NCTC 11857 / SLCC 5334 / V8) protein is Thiamine-phosphate synthase.